The sequence spans 220 residues: uncharacterized protein (220 aa).

Transmembrane regions (helical) follow at residues 6 to 26 (FSIL…LIVW), 33 to 53 (IVRL…LRGI), 59 to 79 (ALIA…PWLL), 103 to 123 (LLIT…VVNL), 126 to 146 (GVTI…LFVM), 157 to 177 (AGFL…TAGV), and 179 to 199 (LIVE…IGVL).

It is found in the cell membrane. This is an uncharacterized protein from Mycobacterium tuberculosis (strain ATCC 25618 / H37Rv).